Reading from the N-terminus, the 150-residue chain is uncharacterized protein (150 aa).

This sequence to A.tumefaciens conjugal transfer protein TraB.

This is an uncharacterized protein from Agrobacterium tumefaciens (strain 15955).